Consider the following 253-residue polypeptide: Imidazole glycerol phosphate synthase subunit HisF (253 aa).

Catalysis depends on residues Asp11 and Asp130.

Belongs to the HisA/HisF family. As to quaternary structure, heterodimer of HisH and HisF.

It localises to the cytoplasm. It carries out the reaction 5-[(5-phospho-1-deoxy-D-ribulos-1-ylimino)methylamino]-1-(5-phospho-beta-D-ribosyl)imidazole-4-carboxamide + L-glutamine = D-erythro-1-(imidazol-4-yl)glycerol 3-phosphate + 5-amino-1-(5-phospho-beta-D-ribosyl)imidazole-4-carboxamide + L-glutamate + H(+). It functions in the pathway amino-acid biosynthesis; L-histidine biosynthesis; L-histidine from 5-phospho-alpha-D-ribose 1-diphosphate: step 5/9. Its function is as follows. IGPS catalyzes the conversion of PRFAR and glutamine to IGP, AICAR and glutamate. The HisF subunit catalyzes the cyclization activity that produces IGP and AICAR from PRFAR using the ammonia provided by the HisH subunit. In Clostridium botulinum (strain Kyoto / Type A2), this protein is Imidazole glycerol phosphate synthase subunit HisF.